We begin with the raw amino-acid sequence, 92 residues long: Dolichol-phosphate mannosyltransferase subunit 3 (92 aa).

The next 2 membrane-spanning stretches (helical) occupy residues 8–28 (LWAL…ALGL) and 37–57 (VLWP…LGTV).

This sequence belongs to the DPM3 family. Component of the dolichol-phosphate mannose (DPM) synthase complex composed of DPM1, DPM2 and DPM3; within the complex, associates with DPM1 via its C-terminal domain and with DPM2 via its N-terminal portion. This interaction stabilizes DPM1 protein.

The protein localises to the endoplasmic reticulum membrane. It participates in protein modification; protein glycosylation. Functionally, stabilizer subunit of the dolichol-phosphate mannose (DPM) synthase complex; tethers catalytic subunit DPM1 to the endoplasmic reticulum. The polypeptide is Dolichol-phosphate mannosyltransferase subunit 3 (DPM3) (Bos taurus (Bovine)).